Here is a 52-residue protein sequence, read N- to C-terminus: Phospholamban (52 aa).

At M1 the chain carries N-acetylmethionine. Residues 1–31 (MEKVQYLTRSAIRRASTIEMPQQARQKLQNL) lie on the Cytoplasmic side of the membrane. S16 is subject to Phosphoserine; by PKA and DMPK. Residues 16-22 (STIEMPQ) are involved in HAX1 binding. T17 bears the Phosphothreonine; by CaMK2 mark. A helical membrane pass occupies residues 32–52 (FINFCLILICLLLICIIVMLL). C36 carries the S-palmitoyl cysteine lipid modification.

The protein belongs to the phospholamban family. Homopentamer. Can also form heterooligomers with other sarcoplasmic/endoplasmic reticulum calcium ATPase (SERCA) regulators ARLN, ERLN, SLN and STRIT1/DWORF. Monomer. Interacts with HAX1. Interacts as a monomer with ATP2A2; the interaction decreases ATP2A2 Ca(2+) affinity. Interacts with VMP1; VMP1 competes with PLN and SLN to prevent them from forming an inhibitory complex with ATP2A2. Interacts with S100A1 in a Ca(2+)-dependent manner. Post-translationally, phosphorylation by PKA abolishes the inhibition of ATP2A2-mediated calcium uptake. Phosphorylated at Thr-17 by CaMK2, and in response to beta-adrenergic stimulation. Phosphorylation by DMPK may stimulate sarcoplasmic reticulum calcium uptake in cardiomyocytes. In terms of processing, palmitoylated by ZDHHC16, promoting formation of the homopentamer. In elongated spermatids, proteolytically cleaved by SPPL2C which modulates intracellular Ca(2+) homeostasis. Heart muscle (at protein level).

The protein resides in the endoplasmic reticulum membrane. It localises to the sarcoplasmic reticulum membrane. It is found in the mitochondrion membrane. Its subcellular location is the membrane. Its function is as follows. Reversibly inhibits the activity of ATP2A2/SERCA2 in cardiac sarcoplasmic reticulum by decreasing the apparent affinity of the ATPase for Ca(2+). Binds preferentially to the ATP-bound E1 conformational form of ATP2A2 which predominates at low Ca(2+) concentrations during the diastolic phase of the cardiac cycle. Inhibits ATP2A2 Ca(2+) affinity by disrupting its allosteric activation by ATP. Modulates the contractility of the heart muscle in response to physiological stimuli via its effects on ATP2A2. Modulates calcium re-uptake during muscle relaxation and plays an important role in calcium homeostasis in the heart muscle. The degree of ATP2A2 inhibition depends on the oligomeric state of PLN. ATP2A2 inhibition is alleviated by PLN phosphorylation. Also inhibits the activity of ATP2A3/SERCA3. Controls intracellular Ca(2+) levels in elongated spermatids and may play a role in germ cell differentiation. In the thalamic reticular nucleus of the brain, plays a role in the regulation of sleep patterns and executive functioning. The chain is Phospholamban from Homo sapiens (Human).